Consider the following 217-residue polypeptide: Large ribosomal subunit protein uL3 (217 aa).

It belongs to the universal ribosomal protein uL3 family. As to quaternary structure, part of the 50S ribosomal subunit. Forms a cluster with proteins L14 and L19.

One of the primary rRNA binding proteins, it binds directly near the 3'-end of the 23S rRNA, where it nucleates assembly of the 50S subunit. The protein is Large ribosomal subunit protein uL3 of Brachyspira hyodysenteriae (strain ATCC 49526 / WA1).